We begin with the raw amino-acid sequence, 275 residues long: Methylthioribulose-1-phosphate dehydratase (275 aa).

Cysteine 125 is a binding site for substrate. Zn(2+)-binding residues include histidine 143 and histidine 145. Catalysis depends on glutamate 168, which acts as the Proton donor/acceptor. Histidine 233 contributes to the Zn(2+) binding site.

Belongs to the aldolase class II family. MtnB subfamily. The cofactor is Zn(2+).

It is found in the cytoplasm. The catalysed reaction is 5-(methylsulfanyl)-D-ribulose 1-phosphate = 5-methylsulfanyl-2,3-dioxopentyl phosphate + H2O. It functions in the pathway amino-acid biosynthesis; L-methionine biosynthesis via salvage pathway; L-methionine from S-methyl-5-thio-alpha-D-ribose 1-phosphate: step 2/6. Functionally, catalyzes the dehydration of methylthioribulose-1-phosphate (MTRu-1-P) into 2,3-diketo-5-methylthiopentyl-1-phosphate (DK-MTP-1-P). The protein is Methylthioribulose-1-phosphate dehydratase of Lodderomyces elongisporus (strain ATCC 11503 / CBS 2605 / JCM 1781 / NBRC 1676 / NRRL YB-4239) (Yeast).